The sequence spans 379 residues: MSNIDGKLPDILSDAVLKQSVPVPDNFVKVEGIDYSKPESRNMRSKDLIKSMATMGFQASSLGKACDIIDEMRSWRGEHRDKLEEHDRKGSFDNDGYQKTTIFMGYTSNLISSGLRETLRFLVQNKMVDAIVATAGGVEEDIIKCLADTYLGEFSLPGKGLRDQGMNRIGNLLVPNDNYCKFEEWIVPILDKMLEEQENYVESQGKDCLDSNFDQDSPVWTPSKLIRRLGKEINDESSVLYWAYKNDIPIFCPAVTDGSIGDMLFFHTFKASPKQLRLDIVSDIRKINSMSMEASRAGMIILGGGLIKHHIANACLMRNGADYAVYINTGQEFDGSDAGARPDEAVSWGKIKADAKSVKVYADATVVFPLVVAATFASE.

NAD(+) is bound by residues 108–112, 134–136, glutamate 140, and aspartate 257; these read SNLIS and TAG. Residue 139 to 140 participates in spermidine binding; it reads EE. Aspartate 262 lines the spermidine pocket. Residue glycine 304 coordinates NAD(+). Residue histidine 309 participates in spermidine binding. NAD(+) is bound at residue 329–330; it reads TG. Residues 335–337 and 344–350 each bind spermidine; these read GSD and EAVSWGK. The Nucleophile role is filled by lysine 350. Residue 363–364 participates in NAD(+) binding; that stretch reads DA.

It belongs to the deoxyhypusine synthase family. NAD(+) serves as cofactor.

It catalyses the reaction [eIF5A protein]-L-lysine + spermidine = [eIF5A protein]-deoxyhypusine + propane-1,3-diamine. The protein operates within protein modification; eIF5A hypusination. Functionally, catalyzes the NAD-dependent oxidative cleavage of spermidine and the subsequent transfer of the butylamine moiety of spermidine to the epsilon-amino group of a specific lysine residue of the eIF-5A precursor protein to form the intermediate deoxyhypusine residue. The polypeptide is Deoxyhypusine synthase (DYS1) (Kluyveromyces lactis (strain ATCC 8585 / CBS 2359 / DSM 70799 / NBRC 1267 / NRRL Y-1140 / WM37) (Yeast)).